Reading from the N-terminus, the 268-residue chain is Orotidine 5'-phosphate decarboxylase (268 aa).

Substrate contacts are provided by residues D37, 59–61, 91–100, Y217, and R235; these read KTH and DRKFADIGNT. K93 (proton donor) is an active-site residue.

This sequence belongs to the OMP decarboxylase family.

The catalysed reaction is orotidine 5'-phosphate + H(+) = UMP + CO2. The protein operates within pyrimidine metabolism; UMP biosynthesis via de novo pathway; UMP from orotate: step 2/2. The polypeptide is Orotidine 5'-phosphate decarboxylase (URA4) (Maudiozyma exigua (Yeast)).